We begin with the raw amino-acid sequence, 246 residues long: Thiamine import ATP-binding protein ThiQ (246 aa).

Residues 10-239 (VKLDALAFAY…QGPPAFARYL (230 aa)) enclose the ABC transporter domain. 41–48 (GPSGSGKS) is an ATP binding site.

It belongs to the ABC transporter superfamily. Thiamine importer (TC 3.A.1.19.1) family. The complex is composed of two ATP-binding proteins (ThiQ), two transmembrane proteins (ThiP) and a solute-binding protein (ThiB).

The protein localises to the cell inner membrane. It catalyses the reaction thiamine(out) + ATP + H2O = thiamine(in) + ADP + phosphate + H(+). In terms of biological role, part of the ABC transporter complex ThiBPQ involved in thiamine import. Responsible for energy coupling to the transport system. The polypeptide is Thiamine import ATP-binding protein ThiQ (Chelativorans sp. (strain BNC1)).